The following is an 887-amino-acid chain: Cytoplasmic aconitate hydratase (887 aa).

Substrate contacts are provided by residues Gln84 and Asp204 to His206. [4Fe-4S] cluster is bound by residues Cys436, Cys502, and Cys505. Substrate-binding positions include Arg535, Arg540, Arg697, and Ser777 to Arg778.

This sequence belongs to the aconitase/IPM isomerase family. Interacts with gex-3. [4Fe-4S] cluster is required as a cofactor.

The protein resides in the cytoplasm. Its subcellular location is the cytosol. The catalysed reaction is citrate = D-threo-isocitrate. Catalyzes the isomerization of citrate to isocitrate via cis-aconitate. Has probably no RNA-binding activity. The sequence is that of Cytoplasmic aconitate hydratase (aco-1) from Caenorhabditis elegans.